The sequence spans 363 residues: Phosphoribosylformylglycinamidine cyclo-ligase (363 aa).

It belongs to the AIR synthase family.

Its subcellular location is the cytoplasm. It catalyses the reaction 2-formamido-N(1)-(5-O-phospho-beta-D-ribosyl)acetamidine + ATP = 5-amino-1-(5-phospho-beta-D-ribosyl)imidazole + ADP + phosphate + H(+). Its pathway is purine metabolism; IMP biosynthesis via de novo pathway; 5-amino-1-(5-phospho-D-ribosyl)imidazole from N(2)-formyl-N(1)-(5-phospho-D-ribosyl)glycinamide: step 2/2. The polypeptide is Phosphoribosylformylglycinamidine cyclo-ligase (Bartonella tribocorum (strain CIP 105476 / IBS 506)).